The sequence spans 511 residues: Type 2 DNA topoisomerase 6 subunit B-like (511 aa).

A disordered region spans residues D398–L485. Over residues D408–A422 the composition is skewed to polar residues. Low complexity predominate over residues L440–A451. Positions R466–G475 are enriched in basic and acidic residues.

It belongs to the TOP6B-like family. Heterotetramer of SPO11 and 2 TOP6BL chains. Interacts with SPO11. In terms of tissue distribution, detected in lung, spleen,colon and in skeletal muscle. Expressed in the ovaries, Fallopian tubes and uterus.

It localises to the chromosome. In terms of biological role, component of a topoisomerase 6 complex specifically required for meiotic recombination. Together with SPO11, mediates DNA cleavage that forms the double-strand breaks (DSB) that initiate meiotic recombination. The complex promotes relaxation of negative and positive supercoiled DNA and DNA decatenation through cleavage and ligation cycles. This is Type 2 DNA topoisomerase 6 subunit B-like from Homo sapiens (Human).